A 130-amino-acid polypeptide reads, in one-letter code: Large ribosomal subunit protein bL19 (130 aa).

This sequence belongs to the bacterial ribosomal protein bL19 family.

Functionally, this protein is located at the 30S-50S ribosomal subunit interface and may play a role in the structure and function of the aminoacyl-tRNA binding site. The protein is Large ribosomal subunit protein bL19 of Burkholderia lata (strain ATCC 17760 / DSM 23089 / LMG 22485 / NCIMB 9086 / R18194 / 383).